The primary structure comprises 75 residues: Guanine nucleotide-binding protein G(I)/G(S)/G(O) subunit gamma-3 (75 aa).

Thr-5 is subject to Phosphothreonine. Ser-9 is subject to Phosphoserine. A Phosphothreonine modification is found at Thr-10. Ser-12 carries the phosphoserine modification. At Cys-72 the chain carries Cysteine methyl ester. The S-geranylgeranyl cysteine moiety is linked to residue Cys-72. Residues 73-75 constitute a propeptide, removed in mature form; the sequence is ALL.

It belongs to the G protein gamma family. G proteins are composed of 3 units, alpha, beta and gamma. Forms a complex with GNAO1 and GNB1. Interacts with SCN8A. As to expression, abundantly expressed in brain. Low levels in testis.

The protein resides in the cell membrane. Functionally, guanine nucleotide-binding proteins (G proteins) are involved as a modulator or transducer in various transmembrane signaling systems. The beta and gamma chains are required for the GTPase activity, for replacement of GDP by GTP, and for G protein-effector interaction. The polypeptide is Guanine nucleotide-binding protein G(I)/G(S)/G(O) subunit gamma-3 (GNG3) (Bos taurus (Bovine)).